We begin with the raw amino-acid sequence, 315 residues long: MSSRDKPKTFAEVREEICKRREEMISRDNQKKTKTVAQVREEKGKRREEMISRYNQKKAKTVAQVKEGKGKRREEMISRDNRTKPKTVAQVRDAKRKRTFDHVPRGTREPHAYLRNDPAPQVASVPKSVPEEKDVILDRILSNVPRRKKTTSYEFVPPKHPQEPQWLLQVMSRMNGAGDPKLIIEKNLDSNDVDPRQNRLSIPINTVIQNDFLTLDESRLIDEDEITNEGNMGVAAFLVDQRTKKWNMGFKQWFMTTDSGSSYWSFVLRGEWSNVVETNGLKEGDKISLWSFRSNDILCFALVPPTSSVVESLDK.

The interval Met24 to Val129 is disordered. 3 stretches are compositionally biased toward basic and acidic residues: residues Val39–Ile51, Lys66–Thr83, and Phe100–Leu114. A DNA-binding region (TF-B3) is located at residues Ile204–Thr306.

The protein resides in the nucleus. The polypeptide is B3 domain-containing protein At1g05920 (Arabidopsis thaliana (Mouse-ear cress)).